The primary structure comprises 191 residues: dTTP/UTP pyrophosphatase (191 aa).

Aspartate 75 functions as the Proton acceptor in the catalytic mechanism.

The protein belongs to the Maf family. YhdE subfamily. A divalent metal cation is required as a cofactor.

The protein resides in the cytoplasm. It catalyses the reaction dTTP + H2O = dTMP + diphosphate + H(+). It carries out the reaction UTP + H2O = UMP + diphosphate + H(+). Nucleoside triphosphate pyrophosphatase that hydrolyzes dTTP and UTP. May have a dual role in cell division arrest and in preventing the incorporation of modified nucleotides into cellular nucleic acids. This is dTTP/UTP pyrophosphatase from Aliivibrio fischeri (strain ATCC 700601 / ES114) (Vibrio fischeri).